We begin with the raw amino-acid sequence, 558 residues long: MAKKVAVIGAGVSGLSSIKCCVDEDLEPTCFERSDDIGGLWKFTESSKDGMTRVYKSLVTNVCKEMSCYSDFPFHEDYPNFMNHEKFWDYLQEFAEHFDLLKYIQFKTTVCSITKRPDFSETGQWDVVTETEGKQNRAVFDAVMVCTGHFLNPHLPLEAFPGIHKFKGQILHSQEYKIPEGFQGKRVLVIGLGNTGGDIAVELSRTAAQVLLSTRTGTWVLGRSSDWGYPYNMMVTRRCCSFIAQVLPSRFLNWIQERKLNKRFNHEDYGLSITKGKKAKFIVNDELPNCILCGAITMKTSVIEFTETSAVFEDGTVEENIDVVIFTTGYTFSFPFFEEPLKSLCTKKIFLYKQVFPLNLERATLAIIGLIGLKGSILSGTELQARWVTRVFKGLCKIPPSQKLMMEATEKEQLIKRGVFKDTSKDKFDYIAYMDDIAACIGTKPSIPLLFLKDPRLAWEVFFGPCTPYQYRLMGPGKWDGARNAILTQWDRTLKPLKTRIVPDSSKPASMSHYLKAWGAPVLLASLLLICKSSLFLKLVRDKLQDRMSPYLVSLWRG.

FAD contacts are provided by residues 9–13 (GAGVS), glutamate 32, and 40–41 (LW). NADP(+) is bound by residues 60–61 (TN) and 195–198 (TGGD). The helical transmembrane segment at 517–537 (AWGAPVLLASLLLICKSSLFL) threads the bilayer.

Belongs to the FMO family. The cofactor is FAD. Liver.

It is found in the microsome membrane. It localises to the endoplasmic reticulum membrane. The catalysed reaction is N,N-dimethylaniline + NADPH + O2 + H(+) = N,N-dimethylaniline N-oxide + NADP(+) + H2O. This protein is involved in the oxidative metabolism of a variety of xenobiotics such as drugs and pesticides. This Homo sapiens (Human) protein is Dimethylaniline monooxygenase [N-oxide-forming] 4 (FMO4).